The primary structure comprises 113 residues: Large ribosomal subunit protein bL19 (113 aa).

The protein belongs to the bacterial ribosomal protein bL19 family.

This protein is located at the 30S-50S ribosomal subunit interface and may play a role in the structure and function of the aminoacyl-tRNA binding site. The sequence is that of Large ribosomal subunit protein bL19 (rplS) from Mycobacterium bovis (strain ATCC BAA-935 / AF2122/97).